The following is a 348-amino-acid chain: Interferon regulatory factor 2 (348 aa).

A DNA-binding region (IRF tryptophan pentad repeat) is located at residues 5–113 (RMRMRPWLEE…NAFRVYRMLP (109 aa)). An N6-acetyllysine mark is found at K75 and K78. Residues 117 to 137 (RPSKKGKKTKSEKDDKFKQIK) are disordered. Residues 125-137 (TKSEKDDKFKQIK) show a composition bias toward basic and acidic residues. Glycyl lysine isopeptide (Lys-Gly) (interchain with G-Cter in SUMO) cross-links involve residues K137, K164, and K291. The tract at residues 311–348 (LPQVVSTASTSSSRPDRETRASVIKKTSDITQSRVKSC) is disordered. 2 stretches are compositionally biased toward polar residues: residues 314 to 323 (VVSTASTSSS) and 339 to 348 (DITQSRVKSC).

Belongs to the IRF family. As to quaternary structure, interacts with CREBBP in growing cells; the interaction acetylates IRF2 and regulates IRF2-dependent H4 promoter activity.

The protein resides in the nucleus. Functionally, specifically binds to the upstream regulatory region of type I IFN and IFN-inducible MHC class I genes (the interferon consensus sequence (ICS)) and represses those genes. Also acts as an activator for several genes including H4 and IL7. Constitutively binds to the ISRE promoter to activate IL7. Involved in cell cycle regulation through binding the site II (HiNF-M) promoter region of H4 and activating transcription during cell growth. Antagonizes IRF1 transcriptional activation. This chain is Interferon regulatory factor 2 (IRF2), found in Gallus gallus (Chicken).